The following is a 776-amino-acid chain: LPS-assembly protein LptD (776 aa).

A signal peptide spans 1 to 24 (MQHFSRTFLAASIATALFAPYAQA).

The protein belongs to the LptD family. As to quaternary structure, component of the lipopolysaccharide transport and assembly complex. Interacts with LptE and LptA.

The protein resides in the cell outer membrane. Functionally, together with LptE, is involved in the assembly of lipopolysaccharide (LPS) at the surface of the outer membrane. This chain is LPS-assembly protein LptD, found in Vibrio vulnificus (strain YJ016).